Consider the following 404-residue polypeptide: Protein translocase subunit SecD (404 aa).

The next 6 helical transmembrane spans lie at 7-27, 239-259, 262-282, 283-303, 330-350, and 357-377; these read HYIW…FNKV, LIAL…PGIV, IALL…GAAL, TLPG…SNVI, FPAI…LFFL, and GFAV…VFVS.

Belongs to the SecD/SecF family. SecD subfamily. As to quaternary structure, forms a complex with SecF. Part of the essential Sec protein translocation apparatus which comprises SecA, SecYEG and auxiliary proteins SecDF. Other proteins may also be involved.

It is found in the cell inner membrane. In terms of biological role, part of the Sec protein translocase complex. Interacts with the SecYEG preprotein conducting channel. SecDF uses the proton motive force (PMF) to complete protein translocation after the ATP-dependent function of SecA. This Leptotrichia buccalis (strain ATCC 14201 / DSM 1135 / JCM 12969 / NCTC 10249 / C-1013-b) protein is Protein translocase subunit SecD.